A 173-amino-acid polypeptide reads, in one-letter code: Bifunctional protein PyrR (173 aa).

Substrate contacts are provided by residues 40–41 (TR), 97–105 (DDVLYTGRT), and arginine 130. A PRPP-binding motif is present at residues 93 to 105 (VILIDDVLYTGRT).

It belongs to the purine/pyrimidine phosphoribosyltransferase family. PyrR subfamily. As to quaternary structure, homodimer and homohexamer; in equilibrium.

It carries out the reaction UMP + diphosphate = 5-phospho-alpha-D-ribose 1-diphosphate + uracil. Functionally, regulates transcriptional attenuation of the pyrimidine nucleotide (pyr) operon by binding in a uridine-dependent manner to specific sites on pyr mRNA. This disrupts an antiterminator hairpin in the RNA and favors formation of a downstream transcription terminator, leading to a reduced expression of downstream genes. In terms of biological role, also displays a weak uracil phosphoribosyltransferase activity which is not physiologically significant. The sequence is that of Bifunctional protein PyrR from Streptococcus pyogenes serotype M6 (strain ATCC BAA-946 / MGAS10394).